The sequence spans 359 residues: 3-dehydroquinate synthase (359 aa).

Residues 70–75 (DGEQYK), 105–109 (GVIGD), 129–130 (TT), lysine 142, lysine 151, and 169–172 (FYKT) contribute to the NAD(+) site. Residues glutamate 184, histidine 247, and histidine 264 each coordinate Zn(2+).

This sequence belongs to the sugar phosphate cyclases superfamily. Dehydroquinate synthase family. Requires Co(2+) as cofactor. Zn(2+) serves as cofactor. NAD(+) is required as a cofactor.

It localises to the cytoplasm. The enzyme catalyses 7-phospho-2-dehydro-3-deoxy-D-arabino-heptonate = 3-dehydroquinate + phosphate. The protein operates within metabolic intermediate biosynthesis; chorismate biosynthesis; chorismate from D-erythrose 4-phosphate and phosphoenolpyruvate: step 2/7. In terms of biological role, catalyzes the conversion of 3-deoxy-D-arabino-heptulosonate 7-phosphate (DAHP) to dehydroquinate (DHQ). This Francisella tularensis subsp. holarctica (strain FTNF002-00 / FTA) protein is 3-dehydroquinate synthase.